A 189-amino-acid polypeptide reads, in one-letter code: Ribonuclease M5 (189 aa).

Positions 8–91 (KEIIVVEGKD…AFLPKEEALA (84 aa)) constitute a Toprim domain. Mg(2+) contacts are provided by Glu-14, Asp-60, and Asp-62.

This sequence belongs to the ribonuclease M5 family. It depends on Mg(2+) as a cofactor.

It is found in the cytoplasm. The catalysed reaction is Endonucleolytic cleavage of RNA, removing 21 and 42 nucleotides, respectively, from the 5'- and 3'-termini of a 5S-rRNA precursor.. Required for correct processing of both the 5' and 3' ends of 5S rRNA precursor. Cleaves both sides of a double-stranded region yielding mature 5S rRNA in one step. This chain is Ribonuclease M5, found in Bacillus cereus (strain ATCC 14579 / DSM 31 / CCUG 7414 / JCM 2152 / NBRC 15305 / NCIMB 9373 / NCTC 2599 / NRRL B-3711).